Reading from the N-terminus, the 464-residue chain is Protein FAM90A18 (464 aa).

Disordered stretches follow at residues methionine 1 to leucine 42, proline 70 to aspartate 387, and histidine 415 to proline 437. Composition is skewed to basic and acidic residues over residues glycine 74 to valine 89 and asparagine 97 to arginine 114. Positions leucine 180–leucine 197 are enriched in low complexity.

The protein belongs to the FAM90 family.

The sequence is that of Protein FAM90A18 from Homo sapiens (Human).